A 493-amino-acid chain; its full sequence is MNSTSLYAAIDLGSNSFHMLVVREAAGSIQTLTRIKRKVRLAAGLNNDNHLSAEAMERGWQCLRLFAERLQDIPQPQIRVVATATLRLAVNAGEFIAKAQTILGCPVQVISGEEEARLIYQGVAHTTGGADQRLVVDIGGASTELVTGTGAQTTSLFSLSMGCVTWLERYFSDRNLAQENFDDAEKAARDVLRPVADELRFHGWKVCVGASGTVQALQEIMMAQGMDERITLAKLQQLKQRAIQCGRLEELEIEGLTLERALVFPSGLAILIAIFTELNIQSMTLAGGALREGLVYGMLHLAVDQDIRSRTLRNIQRRFIVDTEQANRVAKLADNFLKQVENAWHIEPISRELLLSACQLHEIGLSVDFKQAPYHAAYLVRHLDLPGYTPAQKKLLATLLLNQTNPVDLSSLHQQNAVPPRVAEQLCRLLRLAILFAGRRRDDLVPEITLQALNENLTLTLPGDWLAHHPLGKELIDQESQWQSYVHWPLDVR.

This sequence belongs to the GppA/Ppx family. GppA subfamily.

The catalysed reaction is guanosine 3'-diphosphate 5'-triphosphate + H2O = guanosine 3',5'-bis(diphosphate) + phosphate + H(+). The protein operates within purine metabolism; ppGpp biosynthesis; ppGpp from GTP: step 2/2. Functionally, catalyzes the conversion of pppGpp to ppGpp. Guanosine pentaphosphate (pppGpp) is a cytoplasmic signaling molecule which together with ppGpp controls the 'stringent response', an adaptive process that allows bacteria to respond to amino acid starvation, resulting in the coordinated regulation of numerous cellular activities. The chain is Guanosine-5'-triphosphate,3'-diphosphate pyrophosphatase from Salmonella heidelberg (strain SL476).